The primary structure comprises 726 residues: Catalase-peroxidase (726 aa).

The interval 1 to 33 (MSTSDDIHNTTATGKCPFHQGGHDQSAGAGTTT) is disordered. Positions 105–226 (WHGAGTYRSI…LGATEMGLIY (122 aa)) form a cross-link, tryptophyl-tyrosyl-methioninium (Trp-Tyr) (with M-252). The active-site Proton acceptor is H106. The segment at residues 226–252 (YVNPEGPDHSGEPLSAAAAIRATFGNM) is a cross-link (tryptophyl-tyrosyl-methioninium (Tyr-Met) (with W-105)). H267 is a binding site for heme b.

Belongs to the peroxidase family. Peroxidase/catalase subfamily. As to quaternary structure, homodimer or homotetramer. It depends on heme b as a cofactor. In terms of processing, formation of the three residue Trp-Tyr-Met cross-link is important for the catalase, but not the peroxidase activity of the enzyme.

The enzyme catalyses H2O2 + AH2 = A + 2 H2O. It catalyses the reaction 2 H2O2 = O2 + 2 H2O. Bifunctional enzyme with both catalase and broad-spectrum peroxidase activity. The sequence is that of Catalase-peroxidase from Shigella boydii serotype 4 (strain Sb227).